The primary structure comprises 72 residues: Prokaryotic ubiquitin-like protein Pup (72 aa).

The segment covering 1–11 (MAQRDTGGGQQ) has biased composition (gly residues). The disordered stretch occupies residues 1–41 (MAQRDTGGGQQRTGRRDDETAEAEVEESGASDLKERHEKLS). The segment covering 19–29 (ETAEAEVEESG) has biased composition (acidic residues). Residues 22-61 (EAEVEESGASDLKERHEKLSEDVDSLLDEIDDVLEENAEE) adopt a coiled-coil conformation. Positions 28-66 (SGASDLKERHEKLSEDVDSLLDEIDDVLEENAEEFVKGY) are ARC ATPase binding. The span at 32-41 (DLKERHEKLS) shows a compositional bias: basic and acidic residues. A Deamidated glutamine modification is found at glutamine 72. Residue glutamine 72 forms an Isoglutamyl lysine isopeptide (Gln-Lys) (interchain with K-? in acceptor proteins) linkage.

Belongs to the prokaryotic ubiquitin-like protein family. Strongly interacts with the proteasome-associated ATPase ARC through a hydrophobic interface; the interacting region of Pup lies in its C-terminal half. There is one Pup binding site per ARC hexamer ring. Is modified by deamidation of its C-terminal glutamine to glutamate by the deamidase Dop, a prerequisite to the subsequent pupylation process.

It participates in protein degradation; proteasomal Pup-dependent pathway. Protein modifier that is covalently attached to lysine residues of substrate proteins, thereby targeting them for proteasomal degradation. The tagging system is termed pupylation. The chain is Prokaryotic ubiquitin-like protein Pup from Parafrankia sp. (strain EAN1pec).